We begin with the raw amino-acid sequence, 145 residues long: 3-dehydroquinate dehydratase (145 aa).

Tyrosine 23 acts as the Proton acceptor in catalysis. Positions 74, 80, and 87 each coordinate substrate. The active-site Proton donor is the histidine 100. Substrate is bound by residues 101-102 (LS) and arginine 111.

The protein belongs to the type-II 3-dehydroquinase family. Homododecamer.

It carries out the reaction 3-dehydroquinate = 3-dehydroshikimate + H2O. It participates in metabolic intermediate biosynthesis; chorismate biosynthesis; chorismate from D-erythrose 4-phosphate and phosphoenolpyruvate: step 3/7. Functionally, catalyzes a trans-dehydration via an enolate intermediate. The chain is 3-dehydroquinate dehydratase from Halalkalibacterium halodurans (strain ATCC BAA-125 / DSM 18197 / FERM 7344 / JCM 9153 / C-125) (Bacillus halodurans).